A 454-amino-acid chain; its full sequence is Bifunctional protein GlmU (454 aa).

The interval 1–226 is pyrophosphorylase; it reads MALNVVILAA…AIEVEGANNR (226 aa). UDP-N-acetyl-alpha-D-glucosamine-binding positions include 8–11, Lys22, Gln73, 78–79, 100–102, Gly137, Glu151, Asn166, and Asn224; these read LAAG, GT, and YGD. Asp102 is a Mg(2+) binding site. Asn224 provides a ligand contact to Mg(2+). Residues 227–247 are linker; that stretch reads VQLAQLERAYQAREAEKLMLA. The segment at 248–454 is N-acetyltransferase; that stretch reads GANLRDPHRI…DWKRPVKIKK (207 aa). UDP-N-acetyl-alpha-D-glucosamine-binding residues include Arg330 and Lys348. His360 serves as the catalytic Proton acceptor. UDP-N-acetyl-alpha-D-glucosamine contacts are provided by Tyr363 and Asn374. Acetyl-CoA-binding positions include Ala377, 383–384, Ser402, Ala420, and Arg437; that span reads NY.

In the N-terminal section; belongs to the N-acetylglucosamine-1-phosphate uridyltransferase family. It in the C-terminal section; belongs to the transferase hexapeptide repeat family. Homotrimer. Requires Mg(2+) as cofactor.

It localises to the cytoplasm. The catalysed reaction is alpha-D-glucosamine 1-phosphate + acetyl-CoA = N-acetyl-alpha-D-glucosamine 1-phosphate + CoA + H(+). It catalyses the reaction N-acetyl-alpha-D-glucosamine 1-phosphate + UTP + H(+) = UDP-N-acetyl-alpha-D-glucosamine + diphosphate. Its pathway is nucleotide-sugar biosynthesis; UDP-N-acetyl-alpha-D-glucosamine biosynthesis; N-acetyl-alpha-D-glucosamine 1-phosphate from alpha-D-glucosamine 6-phosphate (route II): step 2/2. It participates in nucleotide-sugar biosynthesis; UDP-N-acetyl-alpha-D-glucosamine biosynthesis; UDP-N-acetyl-alpha-D-glucosamine from N-acetyl-alpha-D-glucosamine 1-phosphate: step 1/1. The protein operates within bacterial outer membrane biogenesis; LPS lipid A biosynthesis. In terms of biological role, catalyzes the last two sequential reactions in the de novo biosynthetic pathway for UDP-N-acetylglucosamine (UDP-GlcNAc). The C-terminal domain catalyzes the transfer of acetyl group from acetyl coenzyme A to glucosamine-1-phosphate (GlcN-1-P) to produce N-acetylglucosamine-1-phosphate (GlcNAc-1-P), which is converted into UDP-GlcNAc by the transfer of uridine 5-monophosphate (from uridine 5-triphosphate), a reaction catalyzed by the N-terminal domain. The protein is Bifunctional protein GlmU of Shewanella putrefaciens (strain CN-32 / ATCC BAA-453).